The primary structure comprises 163 residues: Nucleotide-binding protein YajQ (163 aa).

This sequence belongs to the YajQ family.

Nucleotide-binding protein. The chain is Nucleotide-binding protein YajQ from Escherichia coli O81 (strain ED1a).